The chain runs to 193 residues: Oligoribonuclease (193 aa).

In terms of domain architecture, Exonuclease spans 20–183; the sequence is FVWLDCEMTG…ADVHESIEEL (164 aa). Tyr141 is an active-site residue.

Belongs to the oligoribonuclease family.

It is found in the cytoplasm. Functionally, 3'-to-5' exoribonuclease specific for small oligoribonucleotides. The chain is Oligoribonuclease from Paracidovorax citrulli (strain AAC00-1) (Acidovorax citrulli).